The sequence spans 370 residues: Putative F-box protein At1g47390 (370 aa).

One can recognise an F-box domain in the interval 1–47; sequence MAPEEKLPCELIEEILSRVPPESLVRFRTVSKKWNALFDDKMFINNH.

This chain is Putative F-box protein At1g47390, found in Arabidopsis thaliana (Mouse-ear cress).